The primary structure comprises 265 residues: ATP synthase subunit a (265 aa).

5 consecutive transmembrane segments (helical) span residues 25–45 (FWAV…LFLW), 88–108 (IAPL…MDLI), 142–162 (DLNT…IYSI), 207–227 (LFGN…IGFW), and 233–253 (FAWA…FMML).

The protein belongs to the ATPase A chain family. In terms of assembly, F-type ATPases have 2 components, CF(1) - the catalytic core - and CF(0) - the membrane proton channel. CF(1) has five subunits: alpha(3), beta(3), gamma(1), delta(1), epsilon(1). CF(0) has three main subunits: a(1), b(2) and c(9-12). The alpha and beta chains form an alternating ring which encloses part of the gamma chain. CF(1) is attached to CF(0) by a central stalk formed by the gamma and epsilon chains, while a peripheral stalk is formed by the delta and b chains.

The protein localises to the cell inner membrane. Its function is as follows. Key component of the proton channel; it plays a direct role in the translocation of protons across the membrane. The polypeptide is ATP synthase subunit a (Idiomarina loihiensis (strain ATCC BAA-735 / DSM 15497 / L2-TR)).